A 153-amino-acid polypeptide reads, in one-letter code: MPLLLTGRTFRRDLEAHGCLAVHAPLEGGAETRLLRRLRGAGYRTRLWSARGLGDPEVFLTQKHGIRPPHLGHQSVGRGAAVGEVQEVVPQLGDLLDGDAQVALWLLEGQVLSQSELRSLCDLCSREPRLRIIVEMGGARSLRWQPMSGLLAS.

Belongs to the complex I NdhN subunit family. In terms of assembly, NDH-1 can be composed of about 15 different subunits; different subcomplexes with different compositions have been identified which probably have different functions.

It localises to the cellular thylakoid membrane. The catalysed reaction is a plastoquinone + NADH + (n+1) H(+)(in) = a plastoquinol + NAD(+) + n H(+)(out). The enzyme catalyses a plastoquinone + NADPH + (n+1) H(+)(in) = a plastoquinol + NADP(+) + n H(+)(out). Functionally, NDH-1 shuttles electrons from an unknown electron donor, via FMN and iron-sulfur (Fe-S) centers, to quinones in the respiratory and/or the photosynthetic chain. The immediate electron acceptor for the enzyme in this species is believed to be plastoquinone. Couples the redox reaction to proton translocation, and thus conserves the redox energy in a proton gradient. Cyanobacterial NDH-1 also plays a role in inorganic carbon-concentration. The protein is NAD(P)H-quinone oxidoreductase subunit N of Parasynechococcus marenigrum (strain WH8102).